Here is a 573-residue protein sequence, read N- to C-terminus: Probable cytochrome c oxidase subunit 1 (573 aa).

Residues 40-60 traverse the membrane as a helical segment; that stretch reads IGIMYCVACISFFFIGGLLAL. A Fe(II)-heme a-binding site is contributed by H86. The next 6 helical transmembrane spans lie at 89 to 109, 121 to 141, 170 to 190, 213 to 233, 258 to 278, and 290 to 310; these read IMLL…VLPL, LNAF…AGFI, LWIM…VNMI, IMVT…ALFG, LFWF…FGIV, and IFGY…SVAV. Cu cation-binding residues include H264 and Y268. Positions 264-268 form a cross-link, 1'-histidyl-3'-tyrosine (His-Tyr); that stretch reads HPEVY. 2 residues coordinate Cu cation: H313 and H314. 2 consecutive transmembrane segments (helical) span residues 315 to 335 and 359 to 379; these read MFAT…LIAV and MLFS…GVLL. H397 provides a ligand contact to heme a3. 3 consecutive transmembrane segments (helical) span residues 398–418, 433–453, and 476–496; these read FHYV…YFWF, LHFW…HWLG, and VSTI…WNVF. H399 is a binding site for Fe(II)-heme a.

The protein belongs to the heme-copper respiratory oxidase family.

It is found in the cell membrane. The catalysed reaction is 4 Fe(II)-[cytochrome c] + O2 + 8 H(+)(in) = 4 Fe(III)-[cytochrome c] + 2 H2O + 4 H(+)(out). It participates in energy metabolism; oxidative phosphorylation. Its function is as follows. Cytochrome c oxidase is the component of the respiratory chain that catalyzes the reduction of oxygen to water. Subunits 1-3 form the functional core of the enzyme complex. CO I is the catalytic subunit of the enzyme. Electrons originating in cytochrome c are transferred via the copper A center of subunit 2 and heme A of subunit 1 to the bimetallic center formed by heme A3 and copper B. In Mycobacterium bovis (strain ATCC BAA-935 / AF2122/97), this protein is Probable cytochrome c oxidase subunit 1 (ctaD).